Consider the following 954-residue polypeptide: Glycine dehydrogenase (decarboxylating) (954 aa).

K704 carries the post-translational modification N6-(pyridoxal phosphate)lysine.

This sequence belongs to the GcvP family. In terms of assembly, the glycine cleavage system is composed of four proteins: P, T, L and H. The cofactor is pyridoxal 5'-phosphate.

It catalyses the reaction N(6)-[(R)-lipoyl]-L-lysyl-[glycine-cleavage complex H protein] + glycine + H(+) = N(6)-[(R)-S(8)-aminomethyldihydrolipoyl]-L-lysyl-[glycine-cleavage complex H protein] + CO2. The glycine cleavage system catalyzes the degradation of glycine. The P protein binds the alpha-amino group of glycine through its pyridoxal phosphate cofactor; CO(2) is released and the remaining methylamine moiety is then transferred to the lipoamide cofactor of the H protein. The sequence is that of Glycine dehydrogenase (decarboxylating) from Vibrio vulnificus (strain CMCP6).